The primary structure comprises 95 residues: Large ribosomal subunit protein uL23 (95 aa).

Belongs to the universal ribosomal protein uL23 family. As to quaternary structure, part of the 50S ribosomal subunit. Contacts protein L29, and trigger factor when it is bound to the ribosome.

One of the early assembly proteins it binds 23S rRNA. One of the proteins that surrounds the polypeptide exit tunnel on the outside of the ribosome. Forms the main docking site for trigger factor binding to the ribosome. In Desulforamulus reducens (strain ATCC BAA-1160 / DSM 100696 / MI-1) (Desulfotomaculum reducens), this protein is Large ribosomal subunit protein uL23.